Here is a 41-residue protein sequence, read N- to C-terminus: Alpha-conotoxin CIB (41 aa).

Positions 1–21 are excised as a propeptide; the sequence is SDGRNEAANDEASDVIELALK. 2 disulfides stabilise this stretch: C23–C29 and C24–C37. Positions 25–27 are ser-Xaa-Pro motif, crucial for potent interaction with nAChR; sequence SNP. C37 carries the cysteine amide modification.

This sequence belongs to the conotoxin A superfamily. As to expression, expressed by the venom duct.

The protein resides in the secreted. Alpha-conotoxins act on postsynaptic membranes, they bind to the nicotinic acetylcholine receptors (nAChR) and thus inhibit them. This toxin blocks rat neuronal nAChR alpha-3-beta-2/CHRNA3-CHRNB2 (IC(50)=128.9 nM) and alpha-7/CHRNA7 (IC(50)=1511 nM). In vivo, intramuscular injection into zebrafish does not produce any effect on the locomotion of zebrafish. This chain is Alpha-conotoxin CIB, found in Conus catus (Cat cone).